The chain runs to 307 residues: Small ribosomal subunit biogenesis GTPase RsgA (307 aa).

The interval 1–20 (MPSEHPFSDGISTPNPKETM) is disordered. The segment covering 10–20 (GISTPNPKETM) has biased composition (polar residues). A CP-type G domain is found at 85–242 (RQDAWKTKLI…LIDSPGLQEF (158 aa)). Residues 135–138 (NKAD) and 184–192 (GQSGMGKST) each bind GTP. Positions 266, 271, 273, and 279 each coordinate Zn(2+).

It belongs to the TRAFAC class YlqF/YawG GTPase family. RsgA subfamily. Monomer. Associates with 30S ribosomal subunit, binds 16S rRNA. The cofactor is Zn(2+).

The protein resides in the cytoplasm. One of several proteins that assist in the late maturation steps of the functional core of the 30S ribosomal subunit. Helps release RbfA from mature subunits. May play a role in the assembly of ribosomal proteins into the subunit. Circularly permuted GTPase that catalyzes slow GTP hydrolysis, GTPase activity is stimulated by the 30S ribosomal subunit. This is Small ribosomal subunit biogenesis GTPase RsgA from Neisseria meningitidis serogroup A / serotype 4A (strain DSM 15465 / Z2491).